The chain runs to 277 residues: Urease accessory protein UreD (277 aa).

Belongs to the UreD family. In terms of assembly, ureD, UreF and UreG form a complex that acts as a GTP-hydrolysis-dependent molecular chaperone, activating the urease apoprotein by helping to assemble the nickel containing metallocenter of UreC. The UreE protein probably delivers the nickel.

It is found in the cytoplasm. Required for maturation of urease via the functional incorporation of the urease nickel metallocenter. This is Urease accessory protein UreD from Pseudomonas putida (strain ATCC 47054 / DSM 6125 / CFBP 8728 / NCIMB 11950 / KT2440).